A 719-amino-acid chain; its full sequence is Leucine-rich repeat and fibronectin type-III domain-containing protein 5 (719 aa).

The first 17 residues, 1–17, serve as a signal peptide directing secretion; that stretch reads MEKILFYLFLIGIAVKA. The region spanning 18-51 is the LRRNT domain; sequence QICPKRCVCQILSPNLATLCAKKGLLFVPPNIDR. The Extracellular portion of the chain corresponds to 18–529; that stretch reads QICPKRCVCQ…MQSQFLGGTM (512 aa). LRR repeat units follow at residues 52–73, 76–97, 100–121, 124–145, 148–169, 172–193, and 196–217; these read RTVE…DFAN, SLVD…AFAD, NLRA…MFSG, NLHH…AFDD, ALEE…AVEK, SLHT…TFSH, and KMTR…PLFQ. An N-linked (GlcNAc...) asparagine glycan is attached at Asn-73. Positions 240–286 constitute an LRRCT domain; the sequence is NPLHCNCELLWLRRLSREDDLETCASPPLLTGRYFWSIPEEEFLCEP. Positions 287–373 constitute an Ig-like domain; the sequence is PLITRHTHEM…GEATQIVDLH (87 aa). Cys-308 and Cys-357 form a disulfide bridge. 5 N-linked (GlcNAc...) asparagine glycosylation sites follow: Asn-330, Asn-339, Asn-382, Asn-406, and Asn-452. The disordered stretch occupies residues 385–414; the sequence is NHIHEPDPGSSDISTSTKSGSNTSSSNGDT. The segment covering 393–414 has biased composition (low complexity); that stretch reads GSSDISTSTKSGSNTSSSNGDT. Residues 414–503 enclose the Fibronectin type-III domain; that stretch reads TKLSQDKIVV…ITSLTATRVV (90 aa). Residues 530–550 form a helical membrane-spanning segment; sequence IIIIGGIIVASVLVFIIILMI. Over 551 to 719 the chain is Cytoplasmic; that stretch reads RYKVCNNNGQ…VQETQRLELI (169 aa). Positions 615 to 627 are enriched in low complexity; sequence ETCSSQDSSTTTS. Positions 615-694 are disordered; the sequence is ETCSSQDSST…SVTEGPTSKR (80 aa). Polar residues-rich tracts occupy residues 628–641 and 649–677; these read ALPP…SVSQ and TKPS…TALQ.

The protein belongs to the LRFN family. As to quaternary structure, can form heteromeric complexes with LRFN1, LRFN2, LRFN3 and LFRN4. Able to form homomeric complexes across cell junctions, between adjacent cells. Does not interact with DLG1, DLG2, DLG3 and DLG4.

Its subcellular location is the membrane. Its function is as follows. Cell adhesion molecule that mediates homophilic cell-cell adhesion in a Ca(2+)-independent manner. Promotes neurite outgrowth in hippocampal neurons. This Homo sapiens (Human) protein is Leucine-rich repeat and fibronectin type-III domain-containing protein 5 (LRFN5).